Consider the following 991-residue polypeptide: Integrator complex subunit 10-like protein (991 aa).

Disordered regions lie at residues 180 to 217 (NNNN…NNNN), 310 to 345 (YFDE…DIEK), 462 to 484 (NDYF…SQES), 549 to 614 (NSSS…GQQP), and 961 to 991 (EKQY…EMNE). Positions 319–333 (KQQQQQQQQQQQQEQ) are enriched in low complexity. Positions 473 to 484 (GGDENDENSQES) are enriched in acidic residues. Over residues 549-609 (NSSSGSNGII…NNNNNNNNNN (61 aa)) the composition is skewed to low complexity. A compositionally biased stretch (polar residues) spans 964 to 991 (YSSSNTANNSGVNNSPIHNQNTDVEMNE).

It is found in the nucleus. May be a component of the Integrator complex, a complex involved in the small nuclear RNAs (snRNA) U1 and U2 transcription and in their 3'-box-dependent processing. The sequence is that of Integrator complex subunit 10-like protein from Dictyostelium discoideum (Social amoeba).